Consider the following 520-residue polypeptide: DEP domain-containing protein 7 (520 aa).

The region spanning 45–137 (ALTQVEVKKR…SSCSLYRFIN (93 aa)) is the DEP domain. Residues 148 to 167 (KSNGRCTPQRPKHSSFQSAP) are disordered.

The protein belongs to the DEPDC7 family.

This chain is DEP domain-containing protein 7 (depdc7), found in Xenopus tropicalis (Western clawed frog).